Consider the following 769-residue polypeptide: Portal protein (769 aa).

A putative leucine zipper motif region spans residues 458–479 (LEGYVNNLFKTIEGLKDVNSDL). 2 disordered regions span residues 654-675 (RGPR…DDER) and 750-769 (RQLT…DRRS). Basic and acidic residues predominate over residues 760-769 (VGCERRDRRS).

The protein belongs to the herpesviridae portal protein family. As to quaternary structure, homododecamerizes. Interacts with terminase subunits TRM1 and TRM3.

It localises to the virion. The protein resides in the host nucleus. Functionally, forms a portal in the viral capsid through which viral DNA is translocated during DNA packaging. Assembles as a dodecamer at a single fivefold axe of the T=16 icosahedric capsid. Binds to the molecular motor that translocates the viral DNA, termed terminase. The polypeptide is Portal protein (54) (Homo sapiens (Human)).